Reading from the N-terminus, the 83-residue chain is Small ribosomal subunit protein bS20 (83 aa).

The protein belongs to the bacterial ribosomal protein bS20 family.

Binds directly to 16S ribosomal RNA. The chain is Small ribosomal subunit protein bS20 from Leuconostoc citreum (strain KM20).